Consider the following 618-residue polypeptide: 1-deoxy-D-xylulose-5-phosphate synthase (618 aa).

Thiamine diphosphate contacts are provided by residues His73 and 114-116; that span reads GHS. Mg(2+) is bound at residue Asp145. Residues 146 to 147, Asn174, Tyr284, and Glu364 each bind thiamine diphosphate; that span reads GA. Residue Asn174 participates in Mg(2+) binding.

The protein belongs to the transketolase family. DXPS subfamily. As to quaternary structure, homodimer. Mg(2+) serves as cofactor. Thiamine diphosphate is required as a cofactor.

It catalyses the reaction D-glyceraldehyde 3-phosphate + pyruvate + H(+) = 1-deoxy-D-xylulose 5-phosphate + CO2. Its pathway is metabolic intermediate biosynthesis; 1-deoxy-D-xylulose 5-phosphate biosynthesis; 1-deoxy-D-xylulose 5-phosphate from D-glyceraldehyde 3-phosphate and pyruvate: step 1/1. Catalyzes the acyloin condensation reaction between C atoms 2 and 3 of pyruvate and glyceraldehyde 3-phosphate to yield 1-deoxy-D-xylulose-5-phosphate (DXP). The chain is 1-deoxy-D-xylulose-5-phosphate synthase from Clostridium beijerinckii (strain ATCC 51743 / NCIMB 8052) (Clostridium acetobutylicum).